Here is a 584-residue protein sequence, read N- to C-terminus: Poly(A) RNA polymerase protein 2 (584 aa).

The span at 1–11 (MGAKSVTASSS) shows a compositional bias: polar residues. Disordered regions lie at residues 1 to 63 (MGAK…LPKD) and 81 to 147 (EGFD…QELE). Positions 12 to 35 (KKIKNRHNGKVKKSKKIKKVRKPQ) are enriched in basic residues. Over residues 53-63 (NEQETNKLPKD) the composition is skewed to basic and acidic residues. Acidic residues predominate over residues 130–139 (SEDEQAEQEE). Residues Asp-236 and Asp-238 each coordinate Mg(2+). Residues Gly-301, Lys-326, Asn-431, and Arg-435 each coordinate ATP. The 61-residue stretch at 371–431 (NLGVLLIEFF…AIQDPGDESN (61 aa)) folds into the PAP-associated domain. The segment at 525 to 584 (TSTATATTTDDDYEITNPPAKKAKIEEKPESEPAKRNSGETYITVSSEDDDEDGYNPYTL) is disordered. Residues 547–562 (AKIEEKPESEPAKRNS) are compositionally biased toward basic and acidic residues.

This sequence belongs to the DNA polymerase type-B-like family. As to quaternary structure, component of the TRAMP complex (also called TRF4 complex) composed of at least HUL4, MTR4, PAP2/TRF4 and either AIR1 or AIR2. Interacts with NOP53 and POL2. Interacts directly with AIR2. Requires Mg(2+) as cofactor. It depends on Mn(2+) as a cofactor.

It is found in the nucleus. It carries out the reaction RNA(n) + ATP = RNA(n)-3'-adenine ribonucleotide + diphosphate. In terms of biological role, catalytic subunit of the TRAMP complex which has a poly(A) RNA polymerase activity and is involved in a post-transcriptional quality control mechanism limiting inappropriate expression of genetic information. Polyadenylation is required for the degradative activity of the exosome on several of its nuclear RNA substrates like cryptic transcripts generated by RNA polymerase II and III, or hypomethylated pre-tRNAi-Met. Polyadenylates RNA processing and degradation intermediates of snRNAs, snoRNAs and mRNAs that accumulate in strains lacking a functional exosome. TRF4 is also required for proper nuclear division in mitosis, DNA damage repair and sister chromatid cohesion. Involved in the regulation of histone mRNA levels. May mediate mitotic chromosome condensation. This Saccharomyces cerevisiae (strain ATCC 204508 / S288c) (Baker's yeast) protein is Poly(A) RNA polymerase protein 2 (PAP2).